The chain runs to 288 residues: ATP phosphoribosyltransferase (288 aa).

This sequence belongs to the ATP phosphoribosyltransferase family. Long subfamily. Requires Mg(2+) as cofactor.

Its subcellular location is the cytoplasm. The catalysed reaction is 1-(5-phospho-beta-D-ribosyl)-ATP + diphosphate = 5-phospho-alpha-D-ribose 1-diphosphate + ATP. The protein operates within amino-acid biosynthesis; L-histidine biosynthesis; L-histidine from 5-phospho-alpha-D-ribose 1-diphosphate: step 1/9. Its activity is regulated as follows. Feedback inhibited by histidine. In terms of biological role, catalyzes the condensation of ATP and 5-phosphoribose 1-diphosphate to form N'-(5'-phosphoribosyl)-ATP (PR-ATP). Has a crucial role in the pathway because the rate of histidine biosynthesis seems to be controlled primarily by regulation of HisG enzymatic activity. This is ATP phosphoribosyltransferase from Methanococcus maripaludis (strain DSM 14266 / JCM 13030 / NBRC 101832 / S2 / LL).